A 311-amino-acid polypeptide reads, in one-letter code: DNA-directed RNA polymerase subunit alpha (311 aa).

The segment at Met-1–Thr-226 is alpha N-terminal domain (alpha-NTD). Residues Asp-243–Lys-311 form an alpha C-terminal domain (alpha-CTD) region.

The protein belongs to the RNA polymerase alpha chain family. Homodimer. The RNAP catalytic core consists of 2 alpha, 1 beta, 1 beta' and 1 omega subunit. When a sigma factor is associated with the core the holoenzyme is formed, which can initiate transcription.

It catalyses the reaction RNA(n) + a ribonucleoside 5'-triphosphate = RNA(n+1) + diphosphate. In terms of biological role, DNA-dependent RNA polymerase catalyzes the transcription of DNA into RNA using the four ribonucleoside triphosphates as substrates. This Streptococcus pneumoniae serotype 4 (strain ATCC BAA-334 / TIGR4) protein is DNA-directed RNA polymerase subunit alpha.